The sequence spans 222 residues: 2-C-methyl-D-erythritol 4-phosphate cytidylyltransferase (222 aa).

This sequence belongs to the IspD/TarI cytidylyltransferase family. IspD subfamily.

The enzyme catalyses 2-C-methyl-D-erythritol 4-phosphate + CTP + H(+) = 4-CDP-2-C-methyl-D-erythritol + diphosphate. Its pathway is isoprenoid biosynthesis; isopentenyl diphosphate biosynthesis via DXP pathway; isopentenyl diphosphate from 1-deoxy-D-xylulose 5-phosphate: step 2/6. Its function is as follows. Catalyzes the formation of 4-diphosphocytidyl-2-C-methyl-D-erythritol from CTP and 2-C-methyl-D-erythritol 4-phosphate (MEP). This is 2-C-methyl-D-erythritol 4-phosphate cytidylyltransferase from Azobacteroides pseudotrichonymphae genomovar. CFP2.